The primary structure comprises 248 residues: Metallo-beta-lactamase type 2 (248 aa).

An N-terminal signal peptide occupies residues 1-21 (MKGLKGLLVLALGFTGLQVFG). Zn(2+)-binding residues include His97, His99, Asp101, His160, and Cys179. Residue Lys182 participates in substrate binding. His221 is a Zn(2+) binding site.

Belongs to the metallo-beta-lactamase superfamily. Class-B beta-lactamase family. Monomer. Zn(2+) serves as cofactor.

Its subcellular location is the periplasm. It carries out the reaction a beta-lactam + H2O = a substituted beta-amino acid. Confers resistance to the different beta-lactams antibiotics (penicillin, cephalosporin and carbapenem) via the hydrolysis of the beta-lactam ring. This is Metallo-beta-lactamase type 2 (blaB7) from Elizabethkingia meningoseptica (Chryseobacterium meningosepticum).